The chain runs to 240 residues: 2,3,4,5-tetrahydropyridine-2,6-dicarboxylate N-acetyltransferase (240 aa).

The protein belongs to the transferase hexapeptide repeat family. DapH subfamily.

The enzyme catalyses (S)-2,3,4,5-tetrahydrodipicolinate + acetyl-CoA + H2O = L-2-acetamido-6-oxoheptanedioate + CoA. It participates in amino-acid biosynthesis; L-lysine biosynthesis via DAP pathway; LL-2,6-diaminopimelate from (S)-tetrahydrodipicolinate (acetylase route): step 1/3. Its function is as follows. Catalyzes the transfer of an acetyl group from acetyl-CoA to tetrahydrodipicolinate. The protein is 2,3,4,5-tetrahydropyridine-2,6-dicarboxylate N-acetyltransferase of Bacillus cereus (strain AH187).